The primary structure comprises 83 residues: Molybdopterin synthase sulfur carrier subunit (83 aa).

Residue glycine 83 is modified to 1-thioglycine; alternate. Glycine 83 carries the glycyl adenylate; alternate modification.

It belongs to the MoaD family. MOCS2A subfamily. As to quaternary structure, heterotetramer; composed of 2 small (MOCS2A) and 2 large (MOCS2B) subunits. Post-translationally, C-terminal thiocarboxylation occurs in 2 steps, it is first acyl-adenylated (-COAMP) via the hesA/moeB/thiF part of MOCS3, then thiocarboxylated (-COSH) via the rhodanese domain of MOCS3.

The protein resides in the cytoplasm. It participates in cofactor biosynthesis; molybdopterin biosynthesis. Functionally, acts as a sulfur carrier required for molybdopterin biosynthesis. Component of the molybdopterin synthase complex that catalyzes the conversion of precursor Z into molybdopterin by mediating the incorporation of 2 sulfur atoms into precursor Z to generate a dithiolene group. In the complex, serves as sulfur donor by being thiocarboxylated (-COSH) at its C-terminus by MOCS3. After interaction with MOCS2B, the sulfur is then transferred to precursor Z to form molybdopterin. In Chlamydomonas reinhardtii (Chlamydomonas smithii), this protein is Molybdopterin synthase sulfur carrier subunit.